Reading from the N-terminus, the 119-residue chain is uncharacterized protein (119 aa).

The interval 1–22 is disordered; that stretch reads MQGQAGKRKTDGKVPSNTEQNC.

This is an uncharacterized protein from Saccharomyces cerevisiae (strain ATCC 204508 / S288c) (Baker's yeast).